We begin with the raw amino-acid sequence, 402 residues long: Elongation factor Tu (402 aa).

The tr-type G domain maps to 10–212 (KPHVNIGTIG…AVDEYIPTPE (203 aa)). Positions 19 to 26 (GHVDHGKT) are G1. 19–26 (GHVDHGKT) serves as a coordination point for GTP. T26 contacts Mg(2+). The interval 60–64 (GITIA) is G2. The interval 81 to 84 (DCPG) is G3. GTP-binding positions include 81 to 85 (DCPGH) and 136 to 139 (NKED). The tract at residues 136 to 139 (NKED) is G4. The tract at residues 177 to 179 (SAF) is G5.

Belongs to the TRAFAC class translation factor GTPase superfamily. Classic translation factor GTPase family. EF-Tu/EF-1A subfamily. Monomer.

The protein resides in the cytoplasm. It catalyses the reaction GTP + H2O = GDP + phosphate + H(+). Its function is as follows. GTP hydrolase that promotes the GTP-dependent binding of aminoacyl-tRNA to the A-site of ribosomes during protein biosynthesis. This Aliarcobacter butzleri (strain RM4018) (Arcobacter butzleri) protein is Elongation factor Tu.